Reading from the N-terminus, the 143-residue chain is uncharacterized protein (143 aa).

Residues 1-32 (MITNLRRRTAMAAAGLGAALGLGILLVPTVDA) form the signal peptide.

The protein to M.tuberculosis Rv1269c.

This is an uncharacterized protein from Mycobacterium tuberculosis (strain CDC 1551 / Oshkosh).